The sequence spans 296 residues: Sulfotransferase 1B1 (296 aa).

Position 48-53 (48-53 (KSGTTW)) interacts with 3'-phosphoadenylyl sulfate. Position 107–109 (107–109 (KTH)) interacts with substrate. His-109 serves as the catalytic Proton acceptor. 3'-phosphoadenylyl sulfate contacts are provided by residues Arg-131, Ser-139, Tyr-194, 228-233 (TSFEMM), and 258-260 (RKG).

This sequence belongs to the sulfotransferase 1 family. As to expression, expressed highly in the colon, kidney and small intestine of male and female dogs. Highly expressed in the jejunum and ileum of the male dog than the female dog, which displayed more expression in duodenum (at protein level).

The protein resides in the cytoplasm. The enzyme catalyses a phenol + 3'-phosphoadenylyl sulfate = an aryl sulfate + adenosine 3',5'-bisphosphate + H(+). It carries out the reaction 3,3',5-triiodo-L-thyronine + 3'-phosphoadenylyl sulfate = 3,3',5-triiodo-L-thyronine sulfate + adenosine 3',5'-bisphosphate + H(+). It catalyses the reaction 3,3',5'-triiodo-L-thyronine + 3'-phosphoadenylyl sulfate = 3,3',5'-triiodo-L-thyronine sulfate + adenosine 3',5'-bisphosphate + H(+). The catalysed reaction is 3,3'-diiodo-L-thyronine + 3'-phosphoadenylyl sulfate = 3,3'-diiodo-L-thyronine sulfate + adenosine 3',5'-bisphosphate + H(+). The enzyme catalyses 4-ethylphenol + 3'-phosphoadenylyl sulfate = 4-ethylphenyl sulfate + adenosine 3',5'-bisphosphate + H(+). In terms of biological role, sulfotransferase that utilizes 3'-phospho-5'-adenylyl sulfate (PAPS) as sulfonate donor to catalyze the sulfate conjugation of dopamine, small phenols such as 1-naphthol and p-nitrophenol and thyroid hormones, including 3,3'-diiodothyronine, triidothyronine (T3) and reverse triiodothyronine (rT3). May play a role in gut microbiota-host metabolic interaction. O-sulfonates 4-ethylphenol (4-EP), a dietary tyrosine-derived metabolite produced by gut bacteria. The product 4-EPS crosses the blood-brain barrier and may negatively regulate oligodendrocyte maturation and myelination, affecting the functional connectivity of different brain regions associated with the limbic system. The protein is Sulfotransferase 1B1 (SULT1B1) of Canis lupus familiaris (Dog).